A 131-amino-acid polypeptide reads, in one-letter code: Transcription antitermination protein NusB (131 aa).

This sequence belongs to the NusB family.

Functionally, involved in transcription antitermination. Required for transcription of ribosomal RNA (rRNA) genes. Binds specifically to the boxA antiterminator sequence of the ribosomal RNA (rrn) operons. This is Transcription antitermination protein NusB from Campylobacter concisus (strain 13826).